A 313-amino-acid polypeptide reads, in one-letter code: Malate dehydrogenase (313 aa).

NAD(+)-binding positions include 11-16 (GAGNIG) and Asp35. Residues Arg86 and Arg92 each contribute to the substrate site. NAD(+) contacts are provided by residues Asn99 and 122–124 (ISN). Asn124 and Arg155 together coordinate substrate. His179 functions as the Proton acceptor in the catalytic mechanism.

The protein belongs to the LDH/MDH superfamily. MDH type 3 family.

It carries out the reaction (S)-malate + NAD(+) = oxaloacetate + NADH + H(+). Its function is as follows. Catalyzes the reversible oxidation of malate to oxaloacetate. This Sorangium cellulosum (strain So ce56) (Polyangium cellulosum (strain So ce56)) protein is Malate dehydrogenase.